Consider the following 163-residue polypeptide: Developmental pluripotency-associated protein 3 (163 aa).

In terms of tissue distribution, preferentially expressed in oocyte.

The protein localises to the nucleus. It is found in the cytoplasm. In terms of biological role, primordial germ cell (PGCs)-specific protein involved in epigenetic chromatin reprogramming in the zygote following fertilization. In zygotes, DNA demethylation occurs selectively in the paternal pronucleus before the first cell division, while the adjacent maternal pronucleus and certain paternally-imprinted loci are protected from this process. Participates in protection of DNA methylation in the maternal pronucleus by preventing conversion of 5mC to 5hmC: specifically recognizes and binds histone H3 dimethylated at 'Lys-9' (H3K9me2) on maternal genome, and protects maternal genome from TET3-mediated conversion to 5hmC and subsequent DNA demethylation. Does not bind paternal chromatin, which is mainly packed into protamine and does not contain much H3K9me2 mark. Also protects imprinted loci that are marked with H3K9me2 in mature sperm from DNA demethylation in early embryogenesis. May be important for the totipotent/pluripotent states continuing through preimplantation development. Also involved in chromatin condensation in oocytogenesis. The protein is Developmental pluripotency-associated protein 3 (DPPA3) of Bos taurus (Bovine).